Reading from the N-terminus, the 574-residue chain is Pyruvate kinase PKLR (574 aa).

4 positions are modified to phosphoserine: serine 2, serine 19, serine 26, and serine 43. Arginine 116 is a substrate binding site. Residues asparagine 118, serine 120, aspartate 156, and threonine 157 each coordinate K(+). Position 118–121 (118–121 (NFSH)) interacts with ATP. Residues arginine 163 and lysine 250 each coordinate ATP. At serine 292 the chain carries Phosphoserine. Lysine 313 contacts substrate. Glutamate 315 is a binding site for Mn(2+). Residues glycine 338, aspartate 339, and threonine 371 each coordinate substrate. Aspartate 339 contacts Mn(2+). Beta-D-fructose 1,6-bisphosphate contacts are provided by residues 475–480 (TTTGRS), tryptophan 525, arginine 532, and 559–564 (RPGSGY).

It belongs to the pyruvate kinase family. Homotetramer. Mg(2+) serves as cofactor. Requires Mn(2+) as cofactor. The cofactor is K(+).

The enzyme catalyses pyruvate + ATP = phosphoenolpyruvate + ADP + H(+). It participates in carbohydrate degradation; glycolysis; pyruvate from D-glyceraldehyde 3-phosphate: step 5/5. Allosterically activated by fructose 1,6-bisphosphate. Pyruvate kinase that catalyzes the conversion of phosphoenolpyruvate to pyruvate with the synthesis of ATP, and which plays a key role in glycolysis. In Homo sapiens (Human), this protein is Pyruvate kinase PKLR (PKLR).